The sequence spans 148 residues: Snaclec 4 (148 aa).

Residues 1-23 form the signal peptide; the sequence is MGRFIFVSFSLLVVFFSLSGTEA. Residues 34–148 form the C-type lectin domain; that stretch reads YDQNCYKAFE…DTQFRLQEPG (115 aa).

It belongs to the snaclec family. In terms of assembly, heterodimer; disulfide-linked. Contains disulfide bonds. In terms of tissue distribution, expressed by the venom gland.

It localises to the secreted. Functionally, interferes with one step of hemostasis (modulation of platelet aggregation, or coagulation cascade, for example). The chain is Snaclec 4 from Echis pyramidum leakeyi (Leakey's carpet viper).